The sequence spans 116 residues: Large ribosomal subunit protein uL22 (116 aa).

The protein belongs to the universal ribosomal protein uL22 family. Part of the 50S ribosomal subunit.

In terms of biological role, this protein binds specifically to 23S rRNA; its binding is stimulated by other ribosomal proteins, e.g. L4, L17, and L20. It is important during the early stages of 50S assembly. It makes multiple contacts with different domains of the 23S rRNA in the assembled 50S subunit and ribosome. The globular domain of the protein is located near the polypeptide exit tunnel on the outside of the subunit, while an extended beta-hairpin is found that lines the wall of the exit tunnel in the center of the 70S ribosome. In Wolbachia pipientis subsp. Culex pipiens (strain wPip), this protein is Large ribosomal subunit protein uL22.